Here is a 101-residue protein sequence, read N- to C-terminus: MKLFVLLCVFVLCLASQEKQQDREIPVLCPVCTSLVGKLIDLVLGGAVDKVTDYLETLCAKADGLVETLCTKIVSYGIDKLIEKILEGGSAKLICGLIHAC.

Residues 1-24 (MKLFVLLCVFVLCLASQEKQQDRE) form the signal peptide. Positions 25-101 (IPVLCPVCTS…KLICGLIHAC (77 aa)) constitute a Saposin B-type domain. Intrachain disulfides connect cysteine 29/cysteine 101, cysteine 32/cysteine 95, and cysteine 59/cysteine 70.

As to quaternary structure, monomer. Homodimer. Hexamer; formed during insertion in the membrane.

It localises to the cytoplasmic granule. In terms of biological role, forms pores in the cell membrane of host cells. Has antibacterial activity against M.luteus, no activity against E.coli. Implicated in the cytolytic activity of the parasite. The polypeptide is Pore-forming peptide amoebapore C (Entamoeba histolytica (strain ATCC 30459 / HM-1:IMSS / ABRM)).